We begin with the raw amino-acid sequence, 193 residues long: Transcriptional repressor NrdR (193 aa).

A zinc finger spans residues 3–34; that stretch reads CPYCGGLDTQVKDSRPSEDASAIRRRRICPDC. In terms of domain architecture, ATP-cone spans 49 to 139; sequence LTVVKRSGRK…VYKNFREAKD (91 aa). Residues 150-193 are disordered; the sequence is DQQDGAVPQAEADRPIGAGPPSEAAQPAAGEGGDAPMRRARSRA.

This sequence belongs to the NrdR family. The cofactor is Zn(2+).

In terms of biological role, negatively regulates transcription of bacterial ribonucleotide reductase nrd genes and operons by binding to NrdR-boxes. The protein is Transcriptional repressor NrdR of Methylobacterium nodulans (strain LMG 21967 / CNCM I-2342 / ORS 2060).